The chain runs to 623 residues: MLNRKWSFVFLTFLLVISVNANDDVFEDEDEASESGVEKDEFVPSNFVAPKLADTSKPNFFDYFPVGSKIGQTWIKSLAKKDDVDSEIAKYNGEWSIGAPTKVSIEGDYGLIVKTKARHHAIAAKLETPFVFGSNKFIAQYDVKFEEGQECGGGYLKLLSEGAEKDLASFQDKTPYTIMFGPDKCGASGQVHLIFRYKNPVNGTVSEYHAKQPASIGTAYWDDHNTHLFTLVVKPTGEYSVSVDGKSLYYGNMLSDISPSLTPPKEIFDETDLKPEDWDEREQIEDETASKPDDWDENEPQNVVDESATKPYDWNEEENELIPDPEAQKPQDWDEDMDGSWEAPLIDNPACKGLSGCGTWKPPTIKNPKYRGKWVRPKIANPAYKGKWSPRLIDNPNYFEPKPFDGLAPISAVGIELWTMSENILFDNILITSSEQDASEIAKQTFYIKQQEEYRLAAATGSSNGIFQQIVDATNEKPWLWAVYILCILLPLIAIGVFCFGKGSKPAPNFAKKSDTYSPDDDRVPNLVDDQEEEIIAEDEEDNQPGPSGTQNQPPIDEDEQDEVEQQPSSSKTASSESSSAAEEEDNDHVVHENEPVQPTEEVAKKSPRVTGGAKRRTARRGD.

Residues 1–21 form the signal peptide; it reads MLNRKWSFVFLTFLLVISVNA. Residue aspartate 108 coordinates Ca(2+). Residues cysteine 151 and cysteine 185 are joined by a disulfide bond. Positions 155, 157, 176, and 183 each coordinate an alpha-D-glucoside. N-linked (GlcNAc...) asparagine glycosylation occurs at asparagine 202. A disordered region spans residues 260 to 337; sequence SLTPPKEIFD…QKPQDWDEDM (78 aa). A compositionally biased stretch (basic and acidic residues) spans 266-276; that stretch reads EIFDETDLKPE. The interval 267-400 is p domain (Extended arm); the sequence is IFDETDLKPE…RLIDNPNYFE (134 aa). Repeat copies occupy residues 269–281, 286–298, 305–317, 324–336, and 339–349. 2 4 X approximate repeats regions span residues 269 to 336 and 339 to 396; these read DETD…WDED and GSWE…IDNP. 2 stretches are compositionally biased toward acidic residues: residues 277–287 and 314–323; these read DWDEREQIEDE and WNEEENELIP. A disulfide bridge links cysteine 351 with cysteine 357. A run of 3 repeats spans residues 358–368, 372–382, and 386–396. An an alpha-D-glucoside-binding site is contributed by glutamate 416. Aspartate 427 lines the Ca(2+) pocket. The helical transmembrane segment at 480 to 500 threads the bilayer; that stretch reads LWAVYILCILLPLIAIGVFCF. The disordered stretch occupies residues 536–623; the sequence is IAEDEEDNQP…AKRRTARRGD (88 aa). A compositionally biased stretch (acidic residues) spans 556–565; that stretch reads IDEDEQDEVE. A compositionally biased stretch (low complexity) spans 566-581; that stretch reads QQPSSSKTASSESSSA. The span at 614 to 623 shows a compositional bias: basic residues; sequence AKRRTARRGD.

This sequence belongs to the calreticulin family. In terms of processing, glycosylation is important for its biological activity.

It is found in the endoplasmic reticulum membrane. It localises to the cytoplasm. The protein resides in the perinuclear region. Its subcellular location is the cytoplasmic vesicle. Calcium-binding protein that interacts with newly synthesized monoglucosylated glycoproteins in the endoplasmic reticulum. It may act in assisting protein assembly and/or in the retention within the ER of unassembled protein subunits. It seems to play a major role in the quality control apparatus of the ER by the retention of incorrectly folded proteins. Required for embryogenesis and larval development under heat and ER stress conditions. May be important for germ cell development. Involved in neuronal necrotic cell death. The polypeptide is Calnexin (Caenorhabditis briggsae).